The sequence spans 508 residues: MGLPWYRVHTVVLNDPGRLLAVHIMHTALVAGWAGSMALYELAVFDPSDPVLDPMWRQGMFVIPFMTRLGITNSWGGWSITGGTITNPGIWSYEGVAGAHIVFSGLCFLAAIWHWVYWDLEIFCDERTGKPSLDLPKIFGIHLFLSGVACFGFGAFHVTGLYGPGIWVSDPYGLTGKVQSVNPAWGVEGFDPFVPGGIASHHIAAGTLGILAGLFHLSVRPPQRLYKGLRMGNIETVLSSSIAAVFFAAFVVAGTMWYGSATTPIELFGPTRYQWDQGYFQQEIYRRVGVSLAENKSLSEAWSKIPEKLAFYDYIGNNPAKGGLFRAGSMDNGDGIAVGWLGHPIFRDKEGRELFVRRMPTFFETFPVVLVDGDGIVRADVPFRRAESKYSVEQVGVTVEFYGGELNGVSYSDPATVKKYARRAQLGEIFELDRATLKSDGVFRSSPRGWFTFGHASFALLFFFGHIWHGARTLFRDVFAGIDPDLDAQVEFGAFQKLGDPTTRRQVV.

Helical transmembrane passes span 21 to 36 (AVHI…WAGS), 101 to 115 (IVFS…IWHW), 140 to 156 (GIHL…FGAF), 203 to 218 (IAAG…FHLS), 237 to 252 (VLSS…AFVV), and 457 to 472 (SFAL…HGAR).

Belongs to the PsbB/PsbC family. PsbB subfamily. PSII is composed of 1 copy each of membrane proteins PsbA, PsbB, PsbC, PsbD, PsbE, PsbF, PsbH, PsbI, PsbJ, PsbK, PsbL, PsbM, PsbT, PsbX, PsbY, PsbZ, Psb30/Ycf12, at least 3 peripheral proteins of the oxygen-evolving complex and a large number of cofactors. It forms dimeric complexes. The cofactor is Binds multiple chlorophylls. PSII binds additional chlorophylls, carotenoids and specific lipids..

It is found in the plastid. The protein resides in the chloroplast thylakoid membrane. In terms of biological role, one of the components of the core complex of photosystem II (PSII). It binds chlorophyll and helps catalyze the primary light-induced photochemical processes of PSII. PSII is a light-driven water:plastoquinone oxidoreductase, using light energy to abstract electrons from H(2)O, generating O(2) and a proton gradient subsequently used for ATP formation. This chain is Photosystem II CP47 reaction center protein, found in Buxus microphylla (Littleleaf boxwood).